A 339-amino-acid chain; its full sequence is Aspartate carbamoyltransferase catalytic subunit (339 aa).

2 residues coordinate carbamoyl phosphate: R69 and T70. K97 provides a ligand contact to L-aspartate. Residues R119, H149, and Q152 each coordinate carbamoyl phosphate. Residues R182 and R237 each contribute to the L-aspartate site. Positions 278 and 279 each coordinate carbamoyl phosphate.

It belongs to the aspartate/ornithine carbamoyltransferase superfamily. ATCase family. Heterododecamer (2C3:3R2) of six catalytic PyrB chains organized as two trimers (C3), and six regulatory PyrI chains organized as three dimers (R2).

It carries out the reaction carbamoyl phosphate + L-aspartate = N-carbamoyl-L-aspartate + phosphate + H(+). It participates in pyrimidine metabolism; UMP biosynthesis via de novo pathway; (S)-dihydroorotate from bicarbonate: step 2/3. Catalyzes the condensation of carbamoyl phosphate and aspartate to form carbamoyl aspartate and inorganic phosphate, the committed step in the de novo pyrimidine nucleotide biosynthesis pathway. This chain is Aspartate carbamoyltransferase catalytic subunit, found in Hydrogenovibrio crunogenus (strain DSM 25203 / XCL-2) (Thiomicrospira crunogena).